The primary structure comprises 148 residues: Lysozyme C (148 aa).

Residues 1–18 (MKVLIILGLVLLSVMVQG) form the signal peptide. Positions 19–148 (KVFERCELAR…VSQYVQGCGV (130 aa)) constitute a C-type lysozyme domain. Intrachain disulfides connect Cys-24–Cys-146, Cys-48–Cys-134, Cys-83–Cys-99, and Cys-95–Cys-113. Residues Glu-53 and Asp-71 contribute to the active site.

This sequence belongs to the glycosyl hydrolase 22 family. Monomer.

The enzyme catalyses Hydrolysis of (1-&gt;4)-beta-linkages between N-acetylmuramic acid and N-acetyl-D-glucosamine residues in a peptidoglycan and between N-acetyl-D-glucosamine residues in chitodextrins.. Its function is as follows. Lysozymes have primarily a bacteriolytic function; those in tissues and body fluids are associated with the monocyte-macrophage system and enhance the activity of immunoagents. This Callithrix jacchus (White-tufted-ear marmoset) protein is Lysozyme C (LYZ).